The following is a 476-amino-acid chain: Cardiolipin synthase (476 aa).

Transmembrane regions (helical) follow at residues 2–22 (HLFINMIFLINIVFIISIIFI) and 31–51 (WAWILILTFLPILGFIIYILF). PLD phosphodiesterase domains lie at 207–234 (INYRNHRKILIIDSKVAFLGGFNIGDEY) and 389–416 (EKGFLHAKTIVADSSICSVGTANMDIRS). Residues histidine 212, lysine 214, aspartate 219, histidine 394, lysine 396, and aspartate 401 contribute to the active site.

Belongs to the phospholipase D family. Cardiolipin synthase subfamily.

It localises to the cell membrane. It catalyses the reaction 2 a 1,2-diacyl-sn-glycero-3-phospho-(1'-sn-glycerol) = a cardiolipin + glycerol. Functionally, catalyzes the reversible phosphatidyl group transfer from one phosphatidylglycerol molecule to another to form cardiolipin (CL) (diphosphatidylglycerol) and glycerol. The chain is Cardiolipin synthase (cls) from Clostridium perfringens (strain 13 / Type A).